A 291-amino-acid polypeptide reads, in one-letter code: Ribosomal RNA small subunit methyltransferase H (291 aa).

S-adenosyl-L-methionine contacts are provided by residues 36 to 38 (GGH), aspartate 55, alanine 90, aspartate 102, and glutamine 109.

This sequence belongs to the methyltransferase superfamily. RsmH family.

The protein resides in the cytoplasm. It catalyses the reaction cytidine(1402) in 16S rRNA + S-adenosyl-L-methionine = N(4)-methylcytidine(1402) in 16S rRNA + S-adenosyl-L-homocysteine + H(+). Specifically methylates the N4 position of cytidine in position 1402 (C1402) of 16S rRNA. The polypeptide is Ribosomal RNA small subunit methyltransferase H (Thermosipho africanus (strain TCF52B)).